The following is a 438-amino-acid chain: Aspartate--tRNA(Asp/Asn) ligase (438 aa).

Glutamate 176 provides a ligand contact to L-aspartate. The aspartate stretch occupies residues 198-201 (QLYK). Arginine 220 is a binding site for L-aspartate. ATP-binding positions include 220–222 (RAE), 228–230 (RHL), and glutamate 361. Residues glutamate 361 and serine 364 each coordinate Mg(2+). L-aspartate contacts are provided by serine 364 and arginine 368. ATP is bound at residue 409–412 (GADR).

Belongs to the class-II aminoacyl-tRNA synthetase family. Type 2 subfamily. In terms of assembly, homodimer. Requires Mg(2+) as cofactor.

The protein resides in the cytoplasm. It catalyses the reaction tRNA(Asx) + L-aspartate + ATP = L-aspartyl-tRNA(Asx) + AMP + diphosphate. Its function is as follows. Aspartyl-tRNA synthetase with relaxed tRNA specificity since it is able to aspartylate not only its cognate tRNA(Asp) but also tRNA(Asn). Reaction proceeds in two steps: L-aspartate is first activated by ATP to form Asp-AMP and then transferred to the acceptor end of tRNA(Asp/Asn). The chain is Aspartate--tRNA(Asp/Asn) ligase from Methanococcus maripaludis (strain C5 / ATCC BAA-1333).